The primary structure comprises 122 residues: LYR motif-containing protein 1 (122 aa).

This sequence belongs to the complex I LYR family.

Its function is as follows. May promote cell proliferation and inhibition of apoptosis of preadipocytes. The sequence is that of LYR motif-containing protein 1 (Lyrm1) from Mus musculus (Mouse).